The sequence spans 334 residues: Large ribosomal subunit protein uL3 (334 aa).

Over residues 1–10 the composition is skewed to basic residues; the sequence is MGMKKSRPRR. The tract at residues 1 to 20 is disordered; it reads MGMKKSRPRRGSLAFSPRKR.

This sequence belongs to the universal ribosomal protein uL3 family. Part of the 50S ribosomal subunit. Forms a cluster with proteins L14 and L24e.

One of the primary rRNA binding proteins, it binds directly near the 3'-end of the 23S rRNA, where it nucleates assembly of the 50S subunit. This chain is Large ribosomal subunit protein uL3, found in Methanococcus maripaludis (strain C6 / ATCC BAA-1332).